A 2240-amino-acid polypeptide reads, in one-letter code: Cadherin-89D (2240 aa).

5 Cadherin domains span residues 70–179 (SEGV…APEF), 180–295 (LNVP…PPKF), 296–411 (TEGV…VPEF), 412–528 (EADY…TPKF), and 529–643 (EHGN…APYE). N-linked (GlcNAc...) asparagine glycans are attached at residues Asn114, Asn119, Asn191, Asn278, Asn334, Asn417, Asn585, Asn720, Asn752, Asn822, Asn833, Asn983, Asn989, Asn1006, Asn1255, Asn1318, Asn1486, Asn1529, and Asn1556. The tract at residues 814–844 (MPSEPTSRNITMGSRFRSRNRSRSSKSKRRL) is disordered. 5 consecutive Cadherin domains span residues 824-927 (TMGS…APKF), 928-1087 (NALT…APMF), 1171-1284 (TTKC…APTF), 1285-1389 (KKSW…RPEF), and 1411-1520 (MLPV…PPKS). Basic residues predominate over residues 829 to 844 (FRSRNRSRSSKSKRRL). 2 Cadherin domains span residues 1534–1660 (QHAY…APKF) and 1661–1774 (RGNG…MPVE). A helical transmembrane segment spans residues 1884-1904 (FVTVVLLALISLGALIAACCY). The Cytoplasmic segment spans residues 1905 to 2240 (VCMRQKRRLW…LEFSKSNSLF (336 aa)). Disordered stretches follow at residues 1930–1972 (IAGI…PESV) and 2121–2140 (AHLELRQPNTDSSDTYEDSL). A compositionally biased stretch (basic residues) spans 1939-1952 (QKQRRQRQQRHTQR). Polar residues predominate over residues 1953–1964 (CSKGSTGSQRPT).

The protein resides in the cell membrane. Cadherins are calcium-dependent cell adhesion proteins. They preferentially interact with themselves in a homophilic manner in connecting cells. The polypeptide is Cadherin-89D (Cad89D) (Drosophila melanogaster (Fruit fly)).